The sequence spans 276 residues: Undecaprenyl-diphosphatase (276 aa).

The next 5 membrane-spanning stretches (helical) occupy residues 84–104 (YRLGWYVIIGTIPICILGLFF), 115–135 (LWVVVTALVVFSGVIALAEYV), 188–208 (FGFLLAIPAVFASGLFSLPDA), 222–242 (QLLVATLIAFVLGLTAVAWLL), and 250–270 (MYWFVGYRVLVGTGMLVLLAT).

Belongs to the UppP family.

It localises to the cell membrane. It catalyses the reaction di-trans,octa-cis-undecaprenyl diphosphate + H2O = di-trans,octa-cis-undecaprenyl phosphate + phosphate + H(+). In terms of biological role, catalyzes the dephosphorylation of undecaprenyl diphosphate (UPP). Confers resistance to bacitracin. The sequence is that of Undecaprenyl-diphosphatase from Mycobacterium tuberculosis (strain ATCC 25177 / H37Ra).